A 251-amino-acid chain; its full sequence is Hydroxyacylglutathione hydrolase (251 aa).

Zn(2+)-binding residues include His53, His55, Asp57, His58, His110, Asp127, and His165.

This sequence belongs to the metallo-beta-lactamase superfamily. Glyoxalase II family. Monomer. The cofactor is Zn(2+).

It catalyses the reaction an S-(2-hydroxyacyl)glutathione + H2O = a 2-hydroxy carboxylate + glutathione + H(+). The protein operates within secondary metabolite metabolism; methylglyoxal degradation; (R)-lactate from methylglyoxal: step 2/2. Its function is as follows. Thiolesterase that catalyzes the hydrolysis of S-D-lactoyl-glutathione to form glutathione and D-lactic acid. The chain is Hydroxyacylglutathione hydrolase from Pectobacterium carotovorum subsp. carotovorum (strain PC1).